The chain runs to 847 residues: Alanine--tRNA ligase (847 aa).

Zn(2+)-binding residues include His-554, His-558, Cys-656, and His-660.

The protein belongs to the class-II aminoacyl-tRNA synthetase family. Requires Zn(2+) as cofactor.

It localises to the cytoplasm. The enzyme catalyses tRNA(Ala) + L-alanine + ATP = L-alanyl-tRNA(Ala) + AMP + diphosphate. In terms of biological role, catalyzes the attachment of alanine to tRNA(Ala) in a two-step reaction: alanine is first activated by ATP to form Ala-AMP and then transferred to the acceptor end of tRNA(Ala). Also edits incorrectly charged Ser-tRNA(Ala) and Gly-tRNA(Ala) via its editing domain. This is Alanine--tRNA ligase from Helicobacter pylori (strain Shi470).